The chain runs to 461 residues: Argininosuccinate lyase (461 aa).

This sequence belongs to the lyase 1 family. Argininosuccinate lyase subfamily.

The protein resides in the cytoplasm. The enzyme catalyses 2-(N(omega)-L-arginino)succinate = fumarate + L-arginine. Its pathway is amino-acid biosynthesis; L-arginine biosynthesis; L-arginine from L-ornithine and carbamoyl phosphate: step 3/3. This is Argininosuccinate lyase from Dehalococcoides mccartyi (strain CBDB1).